Consider the following 401-residue polypeptide: Probable tRNA sulfurtransferase (401 aa).

The THUMP domain maps to 60–165; the sequence is EPISEQLKGV…EQATYITFKD (106 aa). ATP is bound by residues 183–184, 208–209, arginine 265, glycine 287, and glutamine 296; these read ML and HF.

Belongs to the ThiI family.

It localises to the cytoplasm. It carries out the reaction [ThiI sulfur-carrier protein]-S-sulfanyl-L-cysteine + a uridine in tRNA + 2 reduced [2Fe-2S]-[ferredoxin] + ATP + H(+) = [ThiI sulfur-carrier protein]-L-cysteine + a 4-thiouridine in tRNA + 2 oxidized [2Fe-2S]-[ferredoxin] + AMP + diphosphate. It catalyses the reaction [ThiS sulfur-carrier protein]-C-terminal Gly-Gly-AMP + S-sulfanyl-L-cysteinyl-[cysteine desulfurase] + AH2 = [ThiS sulfur-carrier protein]-C-terminal-Gly-aminoethanethioate + L-cysteinyl-[cysteine desulfurase] + A + AMP + 2 H(+). The protein operates within cofactor biosynthesis; thiamine diphosphate biosynthesis. In terms of biological role, catalyzes the ATP-dependent transfer of a sulfur to tRNA to produce 4-thiouridine in position 8 of tRNAs, which functions as a near-UV photosensor. Also catalyzes the transfer of sulfur to the sulfur carrier protein ThiS, forming ThiS-thiocarboxylate. This is a step in the synthesis of thiazole, in the thiamine biosynthesis pathway. The sulfur is donated as persulfide by IscS. This chain is Probable tRNA sulfurtransferase, found in Bacillus pumilus (strain SAFR-032).